The following is a 206-amino-acid chain: 2,3-bisphosphoglycerate-dependent phosphoglycerate mutase (206 aa).

Substrate-binding positions include 9–16, 22–23, arginine 61, 88–91, lysine 99, 115–116, and 159–160; these read RHGQSEWN, TG, ERDY, RR, and GN. Histidine 10 functions as the Tele-phosphohistidine intermediate in the catalytic mechanism. The active-site Proton donor/acceptor is glutamate 88.

It belongs to the phosphoglycerate mutase family. BPG-dependent PGAM subfamily. Homodimer.

It carries out the reaction (2R)-2-phosphoglycerate = (2R)-3-phosphoglycerate. It participates in carbohydrate degradation; glycolysis; pyruvate from D-glyceraldehyde 3-phosphate: step 3/5. Its function is as follows. Catalyzes the interconversion of 2-phosphoglycerate and 3-phosphoglycerate. The sequence is that of 2,3-bisphosphoglycerate-dependent phosphoglycerate mutase from Brucella anthropi (strain ATCC 49188 / DSM 6882 / CCUG 24695 / JCM 21032 / LMG 3331 / NBRC 15819 / NCTC 12168 / Alc 37) (Ochrobactrum anthropi).